Consider the following 116-residue polypeptide: U3-theraphotoxin-Lsp1a (116 aa).

The N-terminal stretch at 1-17 is a signal peptide; it reads MKLSTFIIMISLAVALA. Positions 18 to 50 are excised as a propeptide; that stretch reads TWPSEHIEGSDSETKLNVELGPYALADRAEKGK.

This sequence belongs to the neurotoxin 25 family. F7 subfamily. Contains 3 disulfide bonds. As to expression, expressed by the venom gland.

It is found in the secreted. The protein is U3-theraphotoxin-Lsp1a of Lasiodora sp. (strain IBSP 8539) (Brazilian salmon pink birdeater).